A 403-amino-acid chain; its full sequence is Heptahelical transmembrane protein ADIPOR3 (403 aa).

The Cytoplasmic segment spans residues 1-73 (MAAAAGEEVE…LSAFSIHNET (73 aa)). A helical membrane pass occupies residues 74 to 94 (LNVWTHLIGFFIFLVLTIYTA). Topologically, residues 95–209 (TQVPNVVDLQ…QLIRPIPRWP (115 aa)) are extracellular. The helical transmembrane segment at 210–230 (FYAFLGGAMFCLLASSTCHLL) threads the bilayer. At 231-246 (SCHSRRLAYIMLRLDY) the chain is on the cytoplasmic side. Residues 247–267 (AGIAALIATSFYPPVYYSFMC) traverse the membrane as a helical segment. Residues 268 to 274 (YPFFCNL) are Extracellular-facing. Residues 275-295 (YLSCITILGVATIAFSLLPVF) traverse the membrane as a helical segment. Residues 296 to 306 (QNPEFRTIRAC) lie on the Cytoplasmic side of the membrane. Residues 307–327 (LFFGMGASGVIPVIHKLILFW) form a helical membrane-spanning segment. Residues 328–331 (HQPE) lie on the Extracellular side of the membrane. A helical membrane pass occupies residues 332 to 352 (ALHTTAYEVLMGLFYGIGALV). Residues 353–374 (YATRVPERWMPGKFDIAGHSHQ) lie on the Cytoplasmic side of the membrane. Residues 375–395 (LFHVLVVAGAYTHYHSGLVYL) traverse the membrane as a helical segment. At 396 to 403 (KWRDVQGC) the chain is on the extracellular side.

The protein belongs to the ADIPOR family.

The protein resides in the membrane. Its function is as follows. May play a role in abiotic stress response. This chain is Heptahelical transmembrane protein ADIPOR3 (ADIPOR3), found in Oryza sativa subsp. japonica (Rice).